A 342-amino-acid chain; its full sequence is scyllo-inositol 2-dehydrogenase (NAD(+)) (342 aa).

The protein belongs to the Gfo/Idh/MocA family.

It catalyses the reaction scyllo-inositol + NAD(+) = scyllo-inosose + NADH + H(+). Its pathway is polyol metabolism. Functionally, catalyzes the reversible NAD(+)-dependent oxidation of scyllo-inositol (SI) to 2,4,6/3,5-pentahydroxycyclohexanone (scyllo-inosose or SIS). Is required for SI catabolism that allows B.subtilis to utilize SI as the sole carbon source for growth. Cannot use NADP(+) instead of NAD(+). The chain is scyllo-inositol 2-dehydrogenase (NAD(+)) from Bacillus subtilis (strain 168).